A 309-amino-acid polypeptide reads, in one-letter code: Sulfate adenylyltransferase subunit 2 (309 aa).

This sequence belongs to the PAPS reductase family. CysD subfamily. As to quaternary structure, heterodimer composed of CysD, the smaller subunit, and CysN.

It carries out the reaction sulfate + ATP + H(+) = adenosine 5'-phosphosulfate + diphosphate. The protein operates within sulfur metabolism; hydrogen sulfide biosynthesis; sulfite from sulfate: step 1/3. In terms of biological role, with CysN forms the ATP sulfurylase (ATPS) that catalyzes the adenylation of sulfate producing adenosine 5'-phosphosulfate (APS) and diphosphate, the first enzymatic step in sulfur assimilation pathway. APS synthesis involves the formation of a high-energy phosphoric-sulfuric acid anhydride bond driven by GTP hydrolysis by CysN coupled to ATP hydrolysis by CysD. The sequence is that of Sulfate adenylyltransferase subunit 2 from Mycolicibacterium vanbaalenii (strain DSM 7251 / JCM 13017 / BCRC 16820 / KCTC 9966 / NRRL B-24157 / PYR-1) (Mycobacterium vanbaalenii).